Here is a 239-residue protein sequence, read N- to C-terminus: tRNA (guanine-N(7)-)-methyltransferase (239 aa).

The S-adenosyl-L-methionine site is built by Glu69, Glu94, Asp121, and Asp144. The active site involves Asp144. Lys148 lines the substrate pocket. An interaction with RNA region spans residues 150-155 (RHNKRR). Substrate-binding positions include Asp180 and 217-220 (TKFE).

It belongs to the class I-like SAM-binding methyltransferase superfamily. TrmB family. Monomer.

The catalysed reaction is guanosine(46) in tRNA + S-adenosyl-L-methionine = N(7)-methylguanosine(46) in tRNA + S-adenosyl-L-homocysteine. It functions in the pathway tRNA modification; N(7)-methylguanine-tRNA biosynthesis. Catalyzes the formation of N(7)-methylguanine at position 46 (m7G46) in tRNA. The protein is tRNA (guanine-N(7)-)-methyltransferase of Cronobacter sakazakii (strain ATCC BAA-894) (Enterobacter sakazakii).